Here is a 419-residue protein sequence, read N- to C-terminus: Serine hydroxymethyltransferase (419 aa).

(6S)-5,6,7,8-tetrahydrofolate-binding positions include Leu121 and 125 to 127; that span reads GHL. N6-(pyridoxal phosphate)lysine is present on Lys229. 354–356 provides a ligand contact to (6S)-5,6,7,8-tetrahydrofolate; that stretch reads SPF.

The protein belongs to the SHMT family. In terms of assembly, homodimer. Requires pyridoxal 5'-phosphate as cofactor.

Its subcellular location is the cytoplasm. It catalyses the reaction (6R)-5,10-methylene-5,6,7,8-tetrahydrofolate + glycine + H2O = (6S)-5,6,7,8-tetrahydrofolate + L-serine. It participates in one-carbon metabolism; tetrahydrofolate interconversion. Its pathway is amino-acid biosynthesis; glycine biosynthesis; glycine from L-serine: step 1/1. In terms of biological role, catalyzes the reversible interconversion of serine and glycine with tetrahydrofolate (THF) serving as the one-carbon carrier. This reaction serves as the major source of one-carbon groups required for the biosynthesis of purines, thymidylate, methionine, and other important biomolecules. Also exhibits THF-independent aldolase activity toward beta-hydroxyamino acids, producing glycine and aldehydes, via a retro-aldol mechanism. This is Serine hydroxymethyltransferase from Coxiella burnetii (strain CbuK_Q154) (Coxiella burnetii (strain Q154)).